Consider the following 830-residue polypeptide: Leucine--tRNA ligase (830 aa).

Residues 48–58 carry the 'HIGH' region motif; that stretch reads PYPSGAIHMGH. Positions 596-600 match the 'KMSKS' region motif; sequence KMSKS. Lys599 contacts ATP.

The protein belongs to the class-I aminoacyl-tRNA synthetase family.

It localises to the cytoplasm. It carries out the reaction tRNA(Leu) + L-leucine + ATP = L-leucyl-tRNA(Leu) + AMP + diphosphate. This is Leucine--tRNA ligase from Helicobacter hepaticus (strain ATCC 51449 / 3B1).